The chain runs to 366 residues: tRNA/tmRNA (uracil-C(5))-methyltransferase (366 aa).

Gln-187, Tyr-215, Asn-220, Glu-236, and Asp-297 together coordinate S-adenosyl-L-methionine. Cys-322 acts as the Nucleophile in catalysis. Residue Glu-356 is the Proton acceptor of the active site.

The protein belongs to the class I-like SAM-binding methyltransferase superfamily. RNA M5U methyltransferase family. TrmA subfamily.

The enzyme catalyses uridine(54) in tRNA + S-adenosyl-L-methionine = 5-methyluridine(54) in tRNA + S-adenosyl-L-homocysteine + H(+). The catalysed reaction is uridine(341) in tmRNA + S-adenosyl-L-methionine = 5-methyluridine(341) in tmRNA + S-adenosyl-L-homocysteine + H(+). Dual-specificity methyltransferase that catalyzes the formation of 5-methyluridine at position 54 (m5U54) in all tRNAs, and that of position 341 (m5U341) in tmRNA (transfer-mRNA). This Marinomonas sp. (strain MWYL1) protein is tRNA/tmRNA (uracil-C(5))-methyltransferase.